Reading from the N-terminus, the 454-residue chain is Na(+)/H(+) antiporter NhaA (454 aa).

10 consecutive transmembrane segments (helical) span residues 22–42, 64–84, 106–126, 150–170, 190–210, 228–248, 284–304, 306–326, 355–375, and 386–406; these read ISGL…NLPF, MGLG…TVGL, LCAV…ISLF, GWAV…ALFA, LLAI…YWFL, VPWL…FEAG, PFSA…VHFE, LTLA…LVVG, MFPA…IASL, and ARFG…ILLS.

It belongs to the NhaA Na(+)/H(+) (TC 2.A.33) antiporter family.

Its subcellular location is the cell membrane. It carries out the reaction Na(+)(in) + 2 H(+)(out) = Na(+)(out) + 2 H(+)(in). Functionally, na(+)/H(+) antiporter that extrudes sodium in exchange for external protons. The protein is Na(+)/H(+) antiporter NhaA of Bifidobacterium adolescentis (strain ATCC 15703 / DSM 20083 / NCTC 11814 / E194a).